A 494-amino-acid polypeptide reads, in one-letter code: 3-octaprenyl-4-hydroxybenzoate carboxy-lyase (494 aa).

Residue Asn-172 participates in Mn(2+) binding. Residues 175-177, 189-191, and 194-195 contribute to the prenylated FMN site; these read IYR, RWL, and RG. Glu-238 provides a ligand contact to Mn(2+). The Proton donor role is filled by Asp-287.

Belongs to the UbiD family. Homohexamer. Prenylated FMN is required as a cofactor. Requires Mn(2+) as cofactor.

The protein localises to the cell membrane. The catalysed reaction is a 4-hydroxy-3-(all-trans-polyprenyl)benzoate + H(+) = a 2-(all-trans-polyprenyl)phenol + CO2. It functions in the pathway cofactor biosynthesis; ubiquinone biosynthesis. Functionally, catalyzes the decarboxylation of 3-octaprenyl-4-hydroxy benzoate to 2-octaprenylphenol, an intermediate step in ubiquinone biosynthesis. The protein is 3-octaprenyl-4-hydroxybenzoate carboxy-lyase of Escherichia coli O139:H28 (strain E24377A / ETEC).